Here is a 1343-residue protein sequence, read N- to C-terminus: DNA-directed RNA polymerase subunit beta (1343 aa).

This sequence belongs to the RNA polymerase beta chain family. The RNAP catalytic core consists of 2 alpha, 1 beta, 1 beta' and 1 omega subunit. When a sigma factor is associated with the core the holoenzyme is formed, which can initiate transcription.

The catalysed reaction is RNA(n) + a ribonucleoside 5'-triphosphate = RNA(n+1) + diphosphate. In terms of biological role, DNA-dependent RNA polymerase catalyzes the transcription of DNA into RNA using the four ribonucleoside triphosphates as substrates. The chain is DNA-directed RNA polymerase subunit beta from Shewanella pealeana (strain ATCC 700345 / ANG-SQ1).